The following is a 97-amino-acid chain: Co-chaperonin GroES (97 aa).

The protein belongs to the GroES chaperonin family. As to quaternary structure, heptamer of 7 subunits arranged in a ring. Interacts with the chaperonin GroEL.

The protein localises to the cytoplasm. Functionally, together with the chaperonin GroEL, plays an essential role in assisting protein folding. The GroEL-GroES system forms a nano-cage that allows encapsulation of the non-native substrate proteins and provides a physical environment optimized to promote and accelerate protein folding. GroES binds to the apical surface of the GroEL ring, thereby capping the opening of the GroEL channel. The polypeptide is Co-chaperonin GroES (Stutzerimonas stutzeri (Pseudomonas stutzeri)).